The sequence spans 76 residues: Vasotab (76 aa).

Residues 1–20 form the signal peptide; the sequence is MKFALFSVLVVLLIATFVAA. Positions 21 to 76 constitute a Kazal-like domain; the sequence is DECPRICTADYRPVCGTPSGGRRSANRTFGNQCSLNAHNCLNKGDTYDKLHDGECK. 3 disulfide bridges follow: Cys23–Cys60, Cys27–Cys53, and Cys35–Cys75.

In terms of tissue distribution, expressed by the salivary gland.

The protein localises to the secreted. Functionally, vasodilator protein that inhibits vasoconstriction of isolated rat femoral artery induced by phenylephrine. Since platelet aggregation and vasoconstriction are key hemostatic responses, particularly in small wounds, this protein likely participates in the antihemostatic responses during blood feeding. Blocks L-type calcium channels (Cav1/CACNA1) in left ventricular myocytes isolated from rat hearts. The polypeptide is Vasotab (Hybomitra bimaculata (Horse fly)).